The primary structure comprises 100 residues: MRTQVLFLIVVLAVMASGDDTAHVYCGRRLATMLLYVCDNQYQVKRPPYISSENEGYGWKWLERQRARQLDEARGKRQGIVEECCNKPCTENELLGYCYK.

A signal peptide spans 1–18 (MRTQVLFLIVVLAVMASG). 3 disulfides stabilise this stretch: C26–C85, C38–C98, and C84–C89. The propeptide at 47–75 (PPYISSENEGYGWKWLERQRARQLDEARG) is c peptide like.

The protein belongs to the insulin family. In terms of assembly, heterodimer of a B chain and an A chain linked by two disulfide bonds.

The protein resides in the secreted. Brain peptide responsible for activation of prothoracic glands to produce ecdysone in insects. This chain is Bombyxin A-2 homolog (SBXA2), found in Samia cynthia (Ailanthus silkmoth).